We begin with the raw amino-acid sequence, 1098 residues long: Sister-chromatid cohesion protein 3 (1098 aa).

The segment at 1-68 (MEDSPQGLKR…RSRTHPPQQN (68 aa)) is disordered. Positions 245–265 (RVDSLNKRLSVTHEQITTLED) form a coiled coil. An SCD domain is found at 275–360 (FVHRYRDIDN…QRFSNRMIEM (86 aa)). Coiled-coil stretches lie at residues 632–653 (KLKDLEDELLDKITSAIREVKD), 888–908 (LESLKRAYHRYSSELSSGREE), and 1009–1032 (LETLEEKCLKNEDLQDDKEAANVR). Positions 1027–1077 (EAANVRRRGRPRKRPETERKRLFDEQSGSDEDESISGGSDREDKLDEDAPL) are disordered. Over residues 1040-1050 (RPETERKRLFD) the composition is skewed to basic and acidic residues.

This sequence belongs to the SCC3 family. Part of the cohesin complex. Interacts with DEK3. As to expression, expressed in roots, mature leaves, buds and seedlings.

Its subcellular location is the nucleus. The protein localises to the chromosome. Its function is as follows. Essential component of cohesin complex, a complex required for the cohesion of sister chromatids after DNA replication. The cohesin complex apparently forms a large proteinaceous ring within which sister chromatids can be trapped. At anaphase, the complex is cleaved and dissociates from chromatin, allowing sister chromatids to segregate. The cohesin complex may also play a role in spindle pole assembly during mitosis. Required for centromere cohesion maintenance at anaphase I and for the monopolar orientation of the kinetochores during both male and female meiosis. Also involved in mitosis. The sequence is that of Sister-chromatid cohesion protein 3 from Arabidopsis thaliana (Mouse-ear cress).